Reading from the N-terminus, the 687-residue chain is Glycine--tRNA ligase beta subunit (687 aa).

Belongs to the class-II aminoacyl-tRNA synthetase family. Tetramer of two alpha and two beta subunits.

The protein localises to the cytoplasm. It catalyses the reaction tRNA(Gly) + glycine + ATP = glycyl-tRNA(Gly) + AMP + diphosphate. This chain is Glycine--tRNA ligase beta subunit, found in Neisseria meningitidis serogroup B (strain ATCC BAA-335 / MC58).